Consider the following 557-residue polypeptide: Potassium-transporting ATPase potassium-binding subunit (557 aa).

12 helical membrane passes run 5 to 25, 63 to 83, 132 to 152, 170 to 190, 253 to 273, 283 to 303, 329 to 349, 356 to 376, 379 to 399, 416 to 436, 484 to 504, and 526 to 546; these read GFLL…PLGS, LCAI…MLLG, GLTV…FALI, LLRI…LFFI, FVQM…FGEV, LLWA…WAEV, VLVS…AVIA, ALGG…FGGV, GLYG…LMIG, LTAL…ALAM, LLAF…MAIA, and LFVG…FIPA.

Belongs to the KdpA family. In terms of assembly, the system is composed of three essential subunits: KdpA, KdpB and KdpC.

The protein localises to the cell inner membrane. Its function is as follows. Part of the high-affinity ATP-driven potassium transport (or Kdp) system, which catalyzes the hydrolysis of ATP coupled with the electrogenic transport of potassium into the cytoplasm. This subunit binds the periplasmic potassium ions and delivers the ions to the membrane domain of KdpB through an intramembrane tunnel. This chain is Potassium-transporting ATPase potassium-binding subunit, found in Escherichia coli O139:H28 (strain E24377A / ETEC).